The following is a 212-amino-acid chain: Large ribosomal subunit protein uL3 (212 aa).

N5-methylglutamine is present on Gln153.

It belongs to the universal ribosomal protein uL3 family. Part of the 50S ribosomal subunit. Forms a cluster with proteins L14 and L19. In terms of processing, methylated by PrmB.

One of the primary rRNA binding proteins, it binds directly near the 3'-end of the 23S rRNA, where it nucleates assembly of the 50S subunit. This Shewanella halifaxensis (strain HAW-EB4) protein is Large ribosomal subunit protein uL3.